The primary structure comprises 102 residues: Small ribosomal subunit protein uS10 (102 aa).

The protein belongs to the universal ribosomal protein uS10 family. As to quaternary structure, part of the 30S ribosomal subunit.

Involved in the binding of tRNA to the ribosomes. This chain is Small ribosomal subunit protein uS10, found in Planobispora rosea.